We begin with the raw amino-acid sequence, 396 residues long: 1-deoxy-D-xylulose 5-phosphate reductoisomerase (396 aa).

Positions 14, 15, 16, 17, 40, and 128 each coordinate NADPH. Lys129 serves as a coordination point for 1-deoxy-D-xylulose 5-phosphate. Residue Glu130 participates in NADPH binding. Asp154 provides a ligand contact to Mn(2+). Residues Ser155, Glu156, Ser180, and His203 each contribute to the 1-deoxy-D-xylulose 5-phosphate site. Glu156 provides a ligand contact to Mn(2+). Residue Gly209 coordinates NADPH. Residues Ser216, Asn221, Lys222, and Glu225 each coordinate 1-deoxy-D-xylulose 5-phosphate. Glu225 serves as a coordination point for Mn(2+).

Belongs to the DXR family. Mg(2+) serves as cofactor. Mn(2+) is required as a cofactor.

It carries out the reaction 2-C-methyl-D-erythritol 4-phosphate + NADP(+) = 1-deoxy-D-xylulose 5-phosphate + NADPH + H(+). It participates in isoprenoid biosynthesis; isopentenyl diphosphate biosynthesis via DXP pathway; isopentenyl diphosphate from 1-deoxy-D-xylulose 5-phosphate: step 1/6. Catalyzes the NADPH-dependent rearrangement and reduction of 1-deoxy-D-xylulose-5-phosphate (DXP) to 2-C-methyl-D-erythritol 4-phosphate (MEP). In Xylella fastidiosa (strain 9a5c), this protein is 1-deoxy-D-xylulose 5-phosphate reductoisomerase.